Here is a 429-residue protein sequence, read N- to C-terminus: Glucose-1-phosphate adenylyltransferase (429 aa).

Alpha-D-glucose 1-phosphate-binding positions include glycine 162, 177–178, and serine 209; that span reads EK.

Belongs to the bacterial/plant glucose-1-phosphate adenylyltransferase family. Homotetramer.

The enzyme catalyses alpha-D-glucose 1-phosphate + ATP + H(+) = ADP-alpha-D-glucose + diphosphate. Its pathway is glycan biosynthesis; glycogen biosynthesis. Involved in the biosynthesis of ADP-glucose, a building block required for the elongation reactions to produce glycogen. Catalyzes the reaction between ATP and alpha-D-glucose 1-phosphate (G1P) to produce pyrophosphate and ADP-Glc. In Gloeothece citriformis (strain PCC 7424) (Cyanothece sp. (strain PCC 7424)), this protein is Glucose-1-phosphate adenylyltransferase.